The following is a 344-amino-acid chain: Holliday junction branch migration complex subunit RuvB (344 aa).

Positions 1 to 182 (MSDRLISATA…FGIISRLEFY (182 aa)) are large ATPase domain (RuvB-L). ATP is bound by residues L21, R22, G63, K66, T67, T68, 129 to 131 (EDF), R172, Y182, and R219. T67 contributes to the Mg(2+) binding site. A small ATPAse domain (RuvB-S) region spans residues 183-253 (NNEDLTRIVT…VAAEALEFFE (71 aa)). Positions 256–344 (PLGLDHTDRR…QKGLEQNSLF (89 aa)) are head domain (RuvB-H). DNA contacts are provided by R311 and R316.

It belongs to the RuvB family. Homohexamer. Forms an RuvA(8)-RuvB(12)-Holliday junction (HJ) complex. HJ DNA is sandwiched between 2 RuvA tetramers; dsDNA enters through RuvA and exits via RuvB. An RuvB hexamer assembles on each DNA strand where it exits the tetramer. Each RuvB hexamer is contacted by two RuvA subunits (via domain III) on 2 adjacent RuvB subunits; this complex drives branch migration. In the full resolvosome a probable DNA-RuvA(4)-RuvB(12)-RuvC(2) complex forms which resolves the HJ.

It is found in the cytoplasm. The catalysed reaction is ATP + H2O = ADP + phosphate + H(+). In terms of biological role, the RuvA-RuvB-RuvC complex processes Holliday junction (HJ) DNA during genetic recombination and DNA repair, while the RuvA-RuvB complex plays an important role in the rescue of blocked DNA replication forks via replication fork reversal (RFR). RuvA specifically binds to HJ cruciform DNA, conferring on it an open structure. The RuvB hexamer acts as an ATP-dependent pump, pulling dsDNA into and through the RuvAB complex. RuvB forms 2 homohexamers on either side of HJ DNA bound by 1 or 2 RuvA tetramers; 4 subunits per hexamer contact DNA at a time. Coordinated motions by a converter formed by DNA-disengaged RuvB subunits stimulates ATP hydrolysis and nucleotide exchange. Immobilization of the converter enables RuvB to convert the ATP-contained energy into a lever motion, pulling 2 nucleotides of DNA out of the RuvA tetramer per ATP hydrolyzed, thus driving DNA branch migration. The RuvB motors rotate together with the DNA substrate, which together with the progressing nucleotide cycle form the mechanistic basis for DNA recombination by continuous HJ branch migration. Branch migration allows RuvC to scan DNA until it finds its consensus sequence, where it cleaves and resolves cruciform DNA. This is Holliday junction branch migration complex subunit RuvB from Desulforamulus reducens (strain ATCC BAA-1160 / DSM 100696 / MI-1) (Desulfotomaculum reducens).